Consider the following 223-residue polypeptide: Proteasome subunit beta type-1 (223 aa).

It belongs to the peptidase T1B family. As to quaternary structure, the 26S proteasome consists of a 20S proteasome core and two 19S regulatory subunits. The 20S proteasome core is composed of 28 subunits that are arranged in four stacked rings, resulting in a barrel-shaped structure. The two end rings are each formed by seven alpha subunits, and the two central rings are each formed by seven beta subunits. The catalytic chamber with the active sites is on the inside of the barrel.

It localises to the cytoplasm. It is found in the nucleus. Non-catalytic component of the proteasome, a multicatalytic proteinase complex which is characterized by its ability to cleave peptides with Arg, Phe, Tyr, Leu, and Glu adjacent to the leaving group at neutral or slightly basic pH. The proteasome has an ATP-dependent proteolytic activity. This Petunia hybrida (Petunia) protein is Proteasome subunit beta type-1 (PBF1).